We begin with the raw amino-acid sequence, 1400 residues long: DNA-directed RNA polymerase subunit beta' (1400 aa).

Zn(2+) is bound by residues Cys71, Cys73, Cys86, and Cys89. Positions 462, 464, and 466 each coordinate Mg(2+). Residues Cys811, Cys885, Cys892, and Cys895 each contribute to the Zn(2+) site.

The protein belongs to the RNA polymerase beta' chain family. As to quaternary structure, the RNAP catalytic core consists of 2 alpha, 1 beta, 1 beta' and 1 omega subunit. When a sigma factor is associated with the core the holoenzyme is formed, which can initiate transcription. Mg(2+) serves as cofactor. Requires Zn(2+) as cofactor.

The catalysed reaction is RNA(n) + a ribonucleoside 5'-triphosphate = RNA(n+1) + diphosphate. DNA-dependent RNA polymerase catalyzes the transcription of DNA into RNA using the four ribonucleoside triphosphates as substrates. This chain is DNA-directed RNA polymerase subunit beta', found in Brucella canis (strain ATCC 23365 / NCTC 10854 / RM-666).